The chain runs to 156 residues: uncharacterized protein (156 aa).

Pro residues predominate over residues 1 to 12 (MSARPSLPPLPA). Disordered stretches follow at residues 1–89 (MSAR…PPPA) and 129–156 (PLSP…TMRD). A compositionally biased stretch (basic and acidic residues) spans 49-67 (ARAEEAGGEEGKREAEAWT).

This is an uncharacterized protein from Homo sapiens (Human).